Reading from the N-terminus, the 39-residue chain is Contryphan-Cal1 (39 aa).

An N-terminal signal peptide occupies residues methionine 1–serine 20. A disulfide bridge connects residues cysteine 29 and cysteine 35.

Expressed by the venom duct.

Its subcellular location is the secreted. Probable neurotoxin. This Californiconus californicus (California cone) protein is Contryphan-Cal1.